We begin with the raw amino-acid sequence, 232 residues long: MSEVKDVIVQGLWKNNSALVQLLGMCPLLAVTSTATNALGLGLATTLVLTLTNLTISSLRRWTPAEIRIPIYVMIIASVVSVVQMLINAYAFGLYQSLGIFIPLIVTNCIVVGRAEAFAAKKGPALSALDGFSIGMGATCAMFVLGSLREILGNGTLFDGADSLLGSWAKVLRIEVFHTDTPFLLAMLPPGAFIGLGMMLAVKYLIDERSKQRKARAARAVSVAPADVTGKA.

The next 5 helical transmembrane spans lie at 39-59, 69-89, 92-112, 125-145, and 182-202; these read LGLG…ISSL, IPIY…LINA, FGLY…CIVV, ALSA…MFVL, and PFLL…MLAV.

Belongs to the NqrDE/RnfAE family. The complex is composed of six subunits: RnfA, RnfB, RnfC, RnfD, RnfE and RnfG.

The protein resides in the cell inner membrane. Part of a membrane-bound complex that couples electron transfer with translocation of ions across the membrane. The chain is Ion-translocating oxidoreductase complex subunit E from Klebsiella pneumoniae (strain 342).